A 710-amino-acid chain; its full sequence is Solute carrier family 15 member 1 (710 aa).

Residues 1–21 (MGMSKSRGCFGYPLSIFFIVV) traverse the membrane as a helical segment. Residues 22–53 (NEFCERFSYYGMRALLVLYFRNFLGWDDDLST) are Extracellular-facing. The chain crosses the membrane as a helical span at residues 54–74 (AIYHTFVALCYLTPILGALIA). Topologically, residues 75 to 82 (DSWLGKFK) are cytoplasmic. A helical transmembrane segment spans residues 83–103 (TIVSLSIVYTIGQAVISVSSI). Residues 104 to 118 (NDLTDHDHDGSPNNL) are Extracellular-facing. Residues 119-139 (PLHVALSMIGLALIALGTGGI) traverse the membrane as a helical segment. Residues 140-161 (KPCVSAFGGDQFEEGQEKQRNR) are Cytoplasmic-facing. Residues 162–182 (FFSIFYLAINAGSLLSTIITP) form a helical membrane-spanning segment. The Extracellular portion of the chain corresponds to 183 to 198 (ILRVQQCGIHSQQACY). The helical transmembrane segment at 199–219 (PLAFGVPAALMAVALIVFVLG) threads the bilayer. Residues 220–276 (SGMYKKFQPQGNIMGKVAKCIRFAIKNRFRHRSKAFPKRNHWLDWAKEKYDERLISQ) are Cytoplasmic-facing. A helical membrane pass occupies residues 277–297 (IKIMTKVMFLYIPLPMFWALF). Residues 298–327 (DQQGSRWTLQATTMTGKIGTIEIQPDQMQT) lie on the Extracellular side of the membrane. The helical transmembrane segment at 328–348 (VNAILIVIMVPIVDAVVYPLI) threads the bilayer. The Cytoplasmic portion of the chain corresponds to 349–361 (AKCGFNFTSLKKM). The chain crosses the membrane as a helical span at residues 362-382 (TVGMFLASMAFVVAAIVQVEI). Residues 383–586 (DKTLPVFPSG…PPNTVNMALQ (204 aa)) are Extracellular-facing. An extracellular domain (ECD) region spans residues 383-586 (DKTLPVFPSG…PPNTVNMALQ (204 aa)). N-linked (GlcNAc...) asparagine glycosylation is found at asparagine 415, asparagine 439, asparagine 510, asparagine 532, and asparagine 539. The chain crosses the membrane as a helical span at residues 587-607 (IPQYFLLTCGEVVFSVTGLEF). The Cytoplasmic portion of the chain corresponds to 608–621 (SYSQAPSNMKSVLQ). A helical membrane pass occupies residues 622–642 (AGWLLTVAIGNIIVLIVAEAG). Over 643–647 (HFDKQ) the chain is Extracellular. The chain crosses the membrane as a helical span at residues 648 to 668 (WAEYVLFASLLLVVCIIFAIM). The Cytoplasmic segment spans residues 669 to 710 (ARFYTYINPAEIEAQFDEDEKKKGVGKENPYSSLEPVSQTNM). A disordered region spans residues 687–710 (DEKKKGVGKENPYSSLEPVSQTNM). Positions 698–710 (PYSSLEPVSQTNM) are enriched in polar residues.

This sequence belongs to the major facilitator superfamily. Proton-dependent oligopeptide transporter (POT/PTR) (TC 2.A.17) family. As to quaternary structure, interacts (via extracellular domain region) with trypsin. In terms of tissue distribution, highly expressed in small intestine. As to expression, expression is restricted to pinealocytes.

The protein resides in the apical cell membrane. It catalyses the reaction a dipeptide(out) + H(+)(out) = a dipeptide(in) + H(+)(in). The catalysed reaction is an L-amino acid tripeptide(out) + H(+)(out) = an L-amino acid tripeptide(in) + H(+)(in). It carries out the reaction L-alanyl-L-lysine(out) + H(+)(out) = L-alanyl-L-lysine(in) + H(+)(in). The enzyme catalyses L-alanyl-L-proline(out) + H(+)(out) = L-alanyl-L-proline(in) + H(+)(in). It catalyses the reaction L-alanyl-L-valine(out) + H(+)(out) = L-alanyl-L-valine(in) + H(+)(in). The catalysed reaction is carnosine(out) + H(+)(out) = carnosine(in) + H(+)(in). It carries out the reaction glycyl-L-glutamine(out) + H(+)(out) = glycyl-L-glutamine(in) + H(+)(in). The enzyme catalyses glycyl-L-leucine(out) + H(+)(out) = glycyl-L-leucine(in) + H(+)(in). It catalyses the reaction glycyl-L-proline(out) + H(+)(out) = glycyl-L-proline(in) + H(+)(in). The catalysed reaction is glycyl-sarcosine(out) + H(+)(out) = glycyl-sarcosine(in) + H(+)(in). It carries out the reaction L-leucyl-L-leucine(out) + H(+)(out) = L-leucyl-L-leucine(in) + H(+)(in). The enzyme catalyses L-leucyl-L-proline(out) + H(+)(out) = L-leucyl-L-proline(in) + H(+)(in). It catalyses the reaction L-phenylalanyl-L-leucine(out) + H(+)(out) = L-phenylalanyl-L-leucine(in) + H(+)(in). The catalysed reaction is L-phenylalanyl-L-phenylalanine(out) + H(+)(out) = L-phenylalanyl-L-phenylalanine(in) + H(+)(in). It carries out the reaction L-lysyl-glycine(out) + H(+)(out) = L-lysyl-glycine(in) + H(+)(in). The enzyme catalyses L-tyrosylglycine(out) + H(+)(out) = L-tyrosylglycine(in) + H(+)(in). It catalyses the reaction L-alanyl-L-aspartate(out) + 2 H(+)(out) = L-alanyl-L-aspartate(in) + 2 H(+)(in). The catalysed reaction is L-aspartyl-glycine(out) + 2 H(+)(out) = L-aspartyl-glycine(in) + 2 H(+)(in). It carries out the reaction glycyl-L-aspartate(out) + 2 H(+)(out) = glycyl-L-aspartate(in) + 2 H(+)(in). The enzyme catalyses glycyl-L-glutamate(out) + 2 H(+)(out) = glycyl-L-glutamate(in) + 2 H(+)(in). It catalyses the reaction L-alanyl-L-leucyl-L-alanine(out) + H(+)(out) = L-alanyl-L-leucyl-L-alanine(in) + H(+)(in). The catalysed reaction is L-alanyl-L-prolylglycine(out) + H(+)(out) = L-alanyl-L-prolylglycine(in) + H(+)(in). It carries out the reaction glycylglycyl-L-isoleucine(out) + H(+)(out) = glycylglycyl-L-isoleucine(in) + H(+)(in). The enzyme catalyses glycylglycyl-L-proline(out) + H(+)(out) = glycylglycyl-L-proline(in) + H(+)(in). It catalyses the reaction L-methionyl-L-phenylalanyl-L-methionine(out) + H(+)(out) = L-methionyl-L-phenylalanyl-L-methionine(in) + H(+)(in). The catalysed reaction is N-acetyl-D-muramoyl-L-alanyl-D-isoglutamine(out) + 2 H(+)(out) = N-acetyl-D-muramoyl-L-alanyl-D-isoglutamine(in) + 2 H(+)(in). It carries out the reaction N(alpha)-formyl-L-methionyl-L-leucyl-L-phenylalanine(out) + 2 H(+)(out) = N(alpha)-formyl-L-methionyl-L-leucyl-L-phenylalanine(in) + 2 H(+)(in). In terms of biological role, electrogenic proton-coupled amino-acid transporter that transports oligopeptides of 2 to 4 amino acids with a preference for dipeptides. Transports neutral and monovalently charged peptides with a proton to peptide stoichiometry of 1:1 or 2:1. Primarily responsible for the absorption of dietary di- and tripeptides from the small intestinal lumen. Mediates transepithelial transport of muramyl and N-formylated bacterial dipeptides contributing to recognition of pathogenic bacteria by the mucosal immune system. This is Solute carrier family 15 member 1 (Slc15a1) from Rattus norvegicus (Rat).